Reading from the N-terminus, the 41-residue chain is MKVVSSIKSAKKRHPACQVVRRRGKIYVINKVEPRYKARQG.

The protein belongs to the bacterial ribosomal protein bL36 family.

This is Large ribosomal subunit protein bL36 from Opitutus terrae (strain DSM 11246 / JCM 15787 / PB90-1).